The following is a 56-amino-acid chain: MASKGGRDKIKLESTAGTGHFYTTTKNKRTMPEKMEIMKFDPVARKHVAYKETKIK.

Residues 1-12 (MASKGGRDKIKL) show a composition bias toward basic and acidic residues. Residues 1 to 28 (MASKGGRDKIKLESTAGTGHFYTTTKNK) form a disordered region. The segment covering 15–25 (TAGTGHFYTTT) has biased composition (polar residues).

The protein belongs to the bacterial ribosomal protein bL33 family.

The sequence is that of Large ribosomal subunit protein bL33 from Cupriavidus necator (strain ATCC 17699 / DSM 428 / KCTC 22496 / NCIMB 10442 / H16 / Stanier 337) (Ralstonia eutropha).